The sequence spans 485 residues: Lysine--tRNA ligase (485 aa).

Mg(2+)-binding residues include glutamate 391 and glutamate 398.

It belongs to the class-II aminoacyl-tRNA synthetase family. As to quaternary structure, homodimer. Requires Mg(2+) as cofactor.

The protein resides in the cytoplasm. It catalyses the reaction tRNA(Lys) + L-lysine + ATP = L-lysyl-tRNA(Lys) + AMP + diphosphate. The sequence is that of Lysine--tRNA ligase from Blochmanniella floridana.